The chain runs to 409 residues: Tyrosine--tRNA ligase (409 aa).

L-tyrosine is bound at residue Y39. The 'HIGH' region signature appears at 44-53; sequence PTAASLHVGS. The L-tyrosine site is built by Y176 and Q180. The short motif at 236–240 is the 'KMSKS' region element; sequence KMGKT. Residue K239 participates in ATP binding. An S4 RNA-binding domain is found at 346–408; sequence ISLVDALVGL…GKKAHGVIQA (63 aa).

Belongs to the class-I aminoacyl-tRNA synthetase family. TyrS type 1 subfamily. As to quaternary structure, homodimer.

It is found in the cytoplasm. The enzyme catalyses tRNA(Tyr) + L-tyrosine + ATP = L-tyrosyl-tRNA(Tyr) + AMP + diphosphate + H(+). Its function is as follows. Catalyzes the attachment of tyrosine to tRNA(Tyr) in a two-step reaction: tyrosine is first activated by ATP to form Tyr-AMP and then transferred to the acceptor end of tRNA(Tyr). The chain is Tyrosine--tRNA ligase from Zymomonas mobilis subsp. mobilis (strain ATCC 31821 / ZM4 / CP4).